The chain runs to 898 residues: Phosphoenolpyruvate carboxylase (898 aa).

Active-site residues include histidine 134 and lysine 564.

This sequence belongs to the PEPCase type 1 family. Requires Mg(2+) as cofactor.

It catalyses the reaction oxaloacetate + phosphate = phosphoenolpyruvate + hydrogencarbonate. Forms oxaloacetate, a four-carbon dicarboxylic acid source for the tricarboxylic acid cycle. This is Phosphoenolpyruvate carboxylase from Chromobacterium violaceum (strain ATCC 12472 / DSM 30191 / JCM 1249 / CCUG 213 / NBRC 12614 / NCIMB 9131 / NCTC 9757 / MK).